The sequence spans 526 residues: Na(+)/H(+) antiporter NhaB (526 aa).

13 helical membrane-spanning segments follow: residues 14 to 34 (FLGY…LINP), 35 to 55 (LLFY…EFIF), 99 to 119 (MLLV…LFVF), 122 to 142 (LLLR…AAAF), 146 to 166 (FLDA…FYGI), 206 to 226 (LMMH…VGEP), 239 to 259 (FVDF…CGIL), 307 to 327 (AVIG…VGLI), 328 to 348 (GLSV…HAIG), 357 to 377 (FTAL…QQLF), 397 to 417 (YLFN…SVYI), 451 to 471 (ATPN…APLI), and 479 to 499 (VIMA…CVEF).

Belongs to the NhaB Na(+)/H(+) (TC 2.A.34) antiporter family.

It localises to the cell inner membrane. The catalysed reaction is 2 Na(+)(in) + 3 H(+)(out) = 2 Na(+)(out) + 3 H(+)(in). In terms of biological role, na(+)/H(+) antiporter that extrudes sodium in exchange for external protons. In Pectobacterium atrosepticum (strain SCRI 1043 / ATCC BAA-672) (Erwinia carotovora subsp. atroseptica), this protein is Na(+)/H(+) antiporter NhaB.